Consider the following 83-residue polypeptide: RNA-binding protein Hfq (83 aa).

The region spanning aspartate 10–valine 69 is the Sm domain.

Belongs to the Hfq family. Homohexamer.

RNA chaperone that binds small regulatory RNA (sRNAs) and mRNAs to facilitate mRNA translational regulation in response to envelope stress, environmental stress and changes in metabolite concentrations. Also binds with high specificity to tRNAs. The sequence is that of RNA-binding protein Hfq from Acidovorax ebreus (strain TPSY) (Diaphorobacter sp. (strain TPSY)).